The following is a 108-amino-acid chain: Thioredoxin (108 aa).

The Thioredoxin domain maps to Asn-2–Lys-108. A disulfide bridge links Cys-32 with Cys-35.

This sequence belongs to the thioredoxin family.

Participates in various redox reactions through the reversible oxidation of its active center dithiol to a disulfide and catalyzes dithiol-disulfide exchange reactions. This is Thioredoxin (trxA) from Buchnera aphidicola subsp. Schizaphis graminum (strain Sg).